A 340-amino-acid chain; its full sequence is 3-isopropylmalate dehydrogenase (340 aa).

Substrate-binding residues include Arg-88, Arg-98, Arg-122, and Asp-212. The Mg(2+) site is built by Asp-212, Asp-236, and Asp-240. 272–284 (GSAPDIAGQGIAD) provides a ligand contact to NAD(+).

It belongs to the isocitrate and isopropylmalate dehydrogenases family. LeuB type 2 subfamily. As to quaternary structure, homodimer. It depends on Mg(2+) as a cofactor. The cofactor is Mn(2+).

It localises to the cytoplasm. It carries out the reaction (2R,3S)-3-isopropylmalate + NAD(+) = 4-methyl-2-oxopentanoate + CO2 + NADH. It participates in amino-acid biosynthesis; L-leucine biosynthesis; L-leucine from 3-methyl-2-oxobutanoate: step 3/4. In terms of biological role, catalyzes the oxidation of 3-carboxy-2-hydroxy-4-methylpentanoate (3-isopropylmalate) to 3-carboxy-4-methyl-2-oxopentanoate. The product decarboxylates to 4-methyl-2 oxopentanoate. This Corynebacterium glutamicum (strain R) protein is 3-isopropylmalate dehydrogenase.